The sequence spans 393 residues: NAD(P)H-quinone oxidoreductase subunit H, chloroplastic (393 aa).

This sequence belongs to the complex I 49 kDa subunit family. As to quaternary structure, NDH is composed of at least 16 different subunits, 5 of which are encoded in the nucleus.

The protein resides in the plastid. Its subcellular location is the chloroplast thylakoid membrane. It carries out the reaction a plastoquinone + NADH + (n+1) H(+)(in) = a plastoquinol + NAD(+) + n H(+)(out). It catalyses the reaction a plastoquinone + NADPH + (n+1) H(+)(in) = a plastoquinol + NADP(+) + n H(+)(out). In terms of biological role, NDH shuttles electrons from NAD(P)H:plastoquinone, via FMN and iron-sulfur (Fe-S) centers, to quinones in the photosynthetic chain and possibly in a chloroplast respiratory chain. The immediate electron acceptor for the enzyme in this species is believed to be plastoquinone. Couples the redox reaction to proton translocation, and thus conserves the redox energy in a proton gradient. The polypeptide is NAD(P)H-quinone oxidoreductase subunit H, chloroplastic (Gossypium hirsutum (Upland cotton)).